The chain runs to 224 residues: 7-cyano-7-deazaguanine synthase (224 aa).

Residue 10 to 20 (LSGGLDSATVV) participates in ATP binding. Residues Cys189, Cys199, Cys202, and Cys205 each contribute to the Zn(2+) site.

It belongs to the QueC family. Requires Zn(2+) as cofactor.

It carries out the reaction 7-carboxy-7-deazaguanine + NH4(+) + ATP = 7-cyano-7-deazaguanine + ADP + phosphate + H2O + H(+). Its pathway is purine metabolism; 7-cyano-7-deazaguanine biosynthesis. Its function is as follows. Catalyzes the ATP-dependent conversion of 7-carboxy-7-deazaguanine (CDG) to 7-cyano-7-deazaguanine (preQ(0)). The polypeptide is 7-cyano-7-deazaguanine synthase (Stutzerimonas stutzeri (strain A1501) (Pseudomonas stutzeri)).